The sequence spans 133 residues: Small ribosomal subunit protein uS8 (133 aa).

Belongs to the universal ribosomal protein uS8 family. Part of the 30S ribosomal subunit. Contacts proteins S5 and S12.

Its function is as follows. One of the primary rRNA binding proteins, it binds directly to 16S rRNA central domain where it helps coordinate assembly of the platform of the 30S subunit. The polypeptide is Small ribosomal subunit protein uS8 (Deinococcus geothermalis (strain DSM 11300 / CIP 105573 / AG-3a)).